The following is a 366-amino-acid chain: Chorismate synthase (366 aa).

NADP(+)-binding residues include R47 and R53. FMN is bound by residues 124–126 (RSS), G286, 301–305 (KPTAT), and R327.

The protein belongs to the chorismate synthase family. Homotetramer. FMNH2 is required as a cofactor.

It catalyses the reaction 5-O-(1-carboxyvinyl)-3-phosphoshikimate = chorismate + phosphate. It functions in the pathway metabolic intermediate biosynthesis; chorismate biosynthesis; chorismate from D-erythrose 4-phosphate and phosphoenolpyruvate: step 7/7. Functionally, catalyzes the anti-1,4-elimination of the C-3 phosphate and the C-6 proR hydrogen from 5-enolpyruvylshikimate-3-phosphate (EPSP) to yield chorismate, which is the branch point compound that serves as the starting substrate for the three terminal pathways of aromatic amino acid biosynthesis. This reaction introduces a second double bond into the aromatic ring system. This Microcystis aeruginosa (strain NIES-843 / IAM M-2473) protein is Chorismate synthase.